The chain runs to 141 residues: uncharacterized protein (141 aa).

The Ferritin-like diiron domain maps to 13–141 (VTKGTELEKE…LKGILDRYFK (129 aa)). Fe cation contacts are provided by E63, H66, E125, and H128.

This is an uncharacterized protein from Methanocaldococcus jannaschii (strain ATCC 43067 / DSM 2661 / JAL-1 / JCM 10045 / NBRC 100440) (Methanococcus jannaschii).